Here is a 644-residue protein sequence, read N- to C-terminus: Chaperone protein DnaK (644 aa).

Disordered regions lie at residues 490 to 533 (QEEA…ELDD) and 570 to 644 (EELQ…EDDA). Basic and acidic residues predominate over residues 492–513 (EAEKHKEEDEARRERIEARNEA). A compositionally biased stretch (acidic residues) spans 523-533 (LLEENEEELDD). The span at 588–622 (GPGGAGGAAGAGPGGMGGMGGAAGPGGAGGAGPGG) shows a compositional bias: gly residues. Positions 624-644 (DADDEEYVDADFEDVDDEDDA) are enriched in acidic residues.

Belongs to the heat shock protein 70 family.

Acts as a chaperone. This chain is Chaperone protein DnaK, found in Halorubrum lacusprofundi (strain ATCC 49239 / DSM 5036 / JCM 8891 / ACAM 34).